The primary structure comprises 277 residues: Large ribosomal subunit protein uL2 (277 aa).

Disordered stretches follow at residues 37–58 (LHSK…GGGH) and 222–277 (GVAM…NRRR). Residues 268-277 (VRRRKQNRRR) show a composition bias toward basic residues.

Belongs to the universal ribosomal protein uL2 family. In terms of assembly, part of the 50S ribosomal subunit. Forms a bridge to the 30S subunit in the 70S ribosome.

Functionally, one of the primary rRNA binding proteins. Required for association of the 30S and 50S subunits to form the 70S ribosome, for tRNA binding and peptide bond formation. It has been suggested to have peptidyltransferase activity; this is somewhat controversial. Makes several contacts with the 16S rRNA in the 70S ribosome. This is Large ribosomal subunit protein uL2 from Parafrankia sp. (strain EAN1pec).